We begin with the raw amino-acid sequence, 578 residues long: Suppressor of smlA (578 aa).

Its function is as follows. Involved in regulation of group size of aggregation streams. The chain is Suppressor of smlA (sslA1) from Dictyostelium discoideum (Social amoeba).